Reading from the N-terminus, the 626-residue chain is Chaperone protein HtpG (626 aa).

The a; substrate-binding stretch occupies residues 1 to 341; it reads METKQFKAES…SEDLSLNISR (341 aa). The b stretch occupies residues 342–552; the sequence is EILQHDRQLK…EGELSIEMEK (211 aa). The segment at 490–509 is disordered; it reads DLGIEGEEKENTSNSDDKEN. Basic and acidic residues predominate over residues 498–509; that stretch reads KENTSNSDDKEN. Residues 553–626 are c; the sequence is VLNAMPNNQN…FTNNICKIMK (74 aa).

The protein belongs to the heat shock protein 90 family. Homodimer.

The protein resides in the cytoplasm. Functionally, molecular chaperone. Has ATPase activity. The protein is Chaperone protein HtpG of Clostridium botulinum (strain ATCC 19397 / Type A).